A 330-amino-acid polypeptide reads, in one-letter code: Aspartate--ammonia ligase (330 aa).

Belongs to the class-II aminoacyl-tRNA synthetase family. AsnA subfamily.

The protein localises to the cytoplasm. The enzyme catalyses L-aspartate + NH4(+) + ATP = L-asparagine + AMP + diphosphate + H(+). The protein operates within amino-acid biosynthesis; L-asparagine biosynthesis; L-asparagine from L-aspartate (ammonia route): step 1/1. The chain is Aspartate--ammonia ligase from Streptococcus agalactiae serotype III (strain NEM316).